Here is a 317-residue protein sequence, read N- to C-terminus: ADP-L-glycero-D-manno-heptose-6-epimerase (317 aa).

Residues 10–11, 31–32, Lys-38, Lys-53, 76–80, and Asn-93 each bind NADP(+); these read FI, DD, and QGACS. Residue Tyr-140 is the Proton acceptor of the active site. Residue Lys-144 participates in NADP(+) binding. Asn-169 contacts substrate. 2 residues coordinate NADP(+): Ile-170 and Lys-178. Lys-178 serves as the catalytic Proton acceptor. Residues Ala-180, His-187, 201-204, Arg-214, and Tyr-278 each bind substrate; that span reads FEGC.

The protein belongs to the NAD(P)-dependent epimerase/dehydratase family. HldD subfamily. As to quaternary structure, homopentamer. NADP(+) is required as a cofactor.

The enzyme catalyses ADP-D-glycero-beta-D-manno-heptose = ADP-L-glycero-beta-D-manno-heptose. It functions in the pathway nucleotide-sugar biosynthesis; ADP-L-glycero-beta-D-manno-heptose biosynthesis; ADP-L-glycero-beta-D-manno-heptose from D-glycero-beta-D-manno-heptose 7-phosphate: step 4/4. Functionally, catalyzes the interconversion between ADP-D-glycero-beta-D-manno-heptose and ADP-L-glycero-beta-D-manno-heptose via an epimerization at carbon 6 of the heptose. The polypeptide is ADP-L-glycero-D-manno-heptose-6-epimerase (Nitrosococcus oceani (strain ATCC 19707 / BCRC 17464 / JCM 30415 / NCIMB 11848 / C-107)).